The chain runs to 645 residues: DNA mismatch repair protein MutL (645 aa).

It belongs to the DNA mismatch repair MutL/HexB family.

Its function is as follows. This protein is involved in the repair of mismatches in DNA. It is required for dam-dependent methyl-directed DNA mismatch repair. May act as a 'molecular matchmaker', a protein that promotes the formation of a stable complex between two or more DNA-binding proteins in an ATP-dependent manner without itself being part of a final effector complex. This chain is DNA mismatch repair protein MutL, found in Geobacillus thermodenitrificans (strain NG80-2).